A 181-amino-acid polypeptide reads, in one-letter code: ATP synthase subunit b, chloroplastic (181 aa).

Residues 31–50 (NVLNIAILLSGVVYLGRNFL) traverse the membrane as a helical segment.

The protein belongs to the ATPase B chain family. F-type ATPases have 2 components, F(1) - the catalytic core - and F(0) - the membrane proton channel. F(1) has five subunits: alpha(3), beta(3), gamma(1), delta(1), epsilon(1). F(0) has four main subunits: a(1), b(1), b'(1) and c(10-14). The alpha and beta chains form an alternating ring which encloses part of the gamma chain. F(1) is attached to F(0) by a central stalk formed by the gamma and epsilon chains, while a peripheral stalk is formed by the delta, b and b' chains.

It localises to the plastid. The protein resides in the chloroplast thylakoid membrane. Functionally, f(1)F(0) ATP synthase produces ATP from ADP in the presence of a proton or sodium gradient. F-type ATPases consist of two structural domains, F(1) containing the extramembraneous catalytic core and F(0) containing the membrane proton channel, linked together by a central stalk and a peripheral stalk. During catalysis, ATP synthesis in the catalytic domain of F(1) is coupled via a rotary mechanism of the central stalk subunits to proton translocation. Its function is as follows. Component of the F(0) channel, it forms part of the peripheral stalk, linking F(1) to F(0). The sequence is that of ATP synthase subunit b, chloroplastic from Rhodomonas salina (Cryptomonas salina).